A 171-amino-acid chain; its full sequence is 3-hydroxydecanoyl-[acyl-carrier-protein] dehydratase (171 aa).

The active site involves histidine 70.

It belongs to the thioester dehydratase family. FabA subfamily. As to quaternary structure, homodimer.

It is found in the cytoplasm. It catalyses the reaction a (3R)-hydroxyacyl-[ACP] = a (2E)-enoyl-[ACP] + H2O. The enzyme catalyses (3R)-hydroxydecanoyl-[ACP] = (2E)-decenoyl-[ACP] + H2O. The catalysed reaction is (2E)-decenoyl-[ACP] = (3Z)-decenoyl-[ACP]. It functions in the pathway lipid metabolism; fatty acid biosynthesis. Necessary for the introduction of cis unsaturation into fatty acids. Catalyzes the dehydration of (3R)-3-hydroxydecanoyl-ACP to E-(2)-decenoyl-ACP and then its isomerization to Z-(3)-decenoyl-ACP. Can catalyze the dehydratase reaction for beta-hydroxyacyl-ACPs with saturated chain lengths up to 16:0, being most active on intermediate chain length. The protein is 3-hydroxydecanoyl-[acyl-carrier-protein] dehydratase of Shewanella loihica (strain ATCC BAA-1088 / PV-4).